A 211-amino-acid chain; its full sequence is N,O-diacetylmuramidase (211 aa).

Catalysis depends on residues aspartate 6 and glutamate 100. A disulfide bridge links cysteine 108 with cysteine 147.

The protein belongs to the glycosyl hydrolase 25 family.

It is found in the secreted. The protein resides in the extracellular space. The enzyme catalyses Hydrolysis of (1-&gt;4)-beta-linkages between N-acetylmuramic acid and N-acetyl-D-glucosamine residues in a peptidoglycan and between N-acetyl-D-glucosamine residues in chitodextrins.. In terms of biological role, this enzyme has both lysozyme (acetylmuramidase) and diacetylmuramidase activities. The polypeptide is N,O-diacetylmuramidase (Chalaropsis sp).